The primary structure comprises 176 residues: Isopentenyl-diphosphate Delta-isomerase (176 aa).

Positions 22 and 28 each coordinate Mn(2+). In terms of domain architecture, Nudix hydrolase spans 26 to 160; sequence LRHKAISVFI…PETFTPWLHI (135 aa). Residue C62 is part of the active site. A Mn(2+)-binding site is contributed by H64. E82 provides a ligand contact to Mg(2+). Mn(2+) contacts are provided by E108 and E110. E110 is an active-site residue.

Belongs to the IPP isomerase type 1 family. Mg(2+) serves as cofactor. The cofactor is Mn(2+).

It localises to the cytoplasm. It catalyses the reaction isopentenyl diphosphate = dimethylallyl diphosphate. It participates in isoprenoid biosynthesis; dimethylallyl diphosphate biosynthesis; dimethylallyl diphosphate from isopentenyl diphosphate: step 1/1. The protein operates within porphyrin-containing compound metabolism; chlorophyll biosynthesis. Catalyzes the 1,3-allylic rearrangement of the homoallylic substrate isopentenyl (IPP) to its highly electrophilic allylic isomer, dimethylallyl diphosphate (DMAPP). The sequence is that of Isopentenyl-diphosphate Delta-isomerase from Jannaschia sp. (strain CCS1).